Here is a 464-residue protein sequence, read N- to C-terminus: Protein FAM90A8 (464 aa).

Disordered regions lie at residues 1-42 (MMAR…DPRL), 69-389 (VPAT…HDGA), and 415-437 (HSPEKPGAFLAQSPHVSEKSEAP). Composition is skewed to basic and acidic residues over residues 74–89 (GKKEGKENLKPWKPRG) and 97–114 (NKDKGEKEERPRQQDPQR). Over residues 180-197 (LASLSPLRKASLSSSSSL) the composition is skewed to low complexity.

Belongs to the FAM90 family.

The protein is Protein FAM90A8 (FAM90A8) of Homo sapiens (Human).